Consider the following 229-residue polypeptide: Claudin-25 (229 aa).

The Cytoplasmic portion of the chain corresponds to M1–Q10. A helical membrane pass occupies residues L11–P31. The Extracellular segment spans residues Q32 to R81. A helical membrane pass occupies residues I82 to S102. Residues E103 to T124 are Cytoplasmic-facing. Residues L125–I145 form a helical membrane-spanning segment. At Q146–G164 the chain is on the extracellular side. Residues A165–F185 traverse the membrane as a helical segment. Topologically, residues S186–I229 are cytoplasmic.

The protein belongs to the claudin family.

The protein localises to the cell junction. It localises to the tight junction. The protein resides in the cell membrane. Functionally, plays a major role in tight junction-specific obliteration of the intercellular space, through calcium-independent cell-adhesion activity. The chain is Claudin-25 (CLDN25) from Homo sapiens (Human).